We begin with the raw amino-acid sequence, 419 residues long: Monooxygenase CTB7 (419 aa).

Belongs to the aromatic-ring hydroxylase family. KMO subfamily.

It functions in the pathway mycotoxin biosynthesis. In terms of biological role, monooxygenase; part of the gene cluster that mediates the biosynthesis of cercosporin, a light-activated, non-host-selective toxin. The perylenequinone chromophore of cercosporin absorbs light energy to attain an electronically-activated triplet state and produces active oxygen species such as the hydroxyl radical, superoxide, hydrogen peroxide or singlet oxygen upon reaction with oxygen molecules. These reactive oxygen species cause damage to various cellular components including lipids, proteins and nucleic acids. The first step of cercosporin biosynthesis is performed by the polyketide synthase CTB1 which catalyzes the formation of nor-toralactone. The starter unit acyltransferase (SAT) domain of CTB1 initiates polyketide extension by the selective utilization of acetyl-CoA, which is elongated to the heptaketide in the beta-ketoacyl synthase (KS) domain by successive condensations with six malonyl units introduced by the malonyl acyltransferase (MAT) domain. The product template (PT) domain catalyzes C4-C9 and C2-C11 aldol cyclizations and dehydrations to a trihydroxynaphthalene, which is thought to be delivered to the thioesterase (TE) domain for product release. The bifunctional enzyme CTB3 then methylates nor-toralactone to toralactone before conducting an unusual oxidative aromatic ring opening. The O-methyltransferase CTB2 further methylates the nascent OH-6 of the CBT3 product, blocking further oxidation at this site before the reductase CTB6 reduces the 2-oxopropyl ketone at position C7, giving naphthalene. The FAD-dependent monooxygenase CTB5 in concert with the multicopper oxidase CTB12 are responsible for homodimerization of naphthalene with CTB7 installing the dioxepine moiety, finally producing cercosporin. The fasciclin domain-containing protein CTB11 might act with CTB5 and CTB12 whereas the roles of CTB9 and CTB10 have still to be elucidated. This Cercospora beticola (Sugarbeet leaf spot fungus) protein is Monooxygenase CTB7.